A 955-amino-acid polypeptide reads, in one-letter code: GPI inositol-deacylase B (955 aa).

N-linked (GlcNAc...) asparagine glycosylation occurs at asparagine 7. The chain crosses the membrane as a helical span at residues 8 to 28; it reads ASVALWTVFTILTIWISFALH. The active site involves serine 180. Asparagine 431 carries N-linked (GlcNAc...) asparagine glycosylation. 4 consecutive transmembrane segments (helical) span residues 489–509, 600–620, 643–663, and 703–723; these read IAFP…SGGV, LLFS…FWRY, YLSW…FEFI, and PIGV…VVVV. An N-linked (GlcNAc...) asparagine glycan is attached at asparagine 753. Helical transmembrane passes span 772-792, 840-860, and 870-890; these read VIIA…LAFA, TMSV…AVWV, and IFSS…IENL. Asparagine 914 carries N-linked (GlcNAc...) asparagine glycosylation. A helical transmembrane segment spans residues 919-939; the sequence is GMMHAFMIHHWFNLLAGWLLI. N-linked (GlcNAc...) asparagine glycosylation is present at asparagine 945.

This sequence belongs to the GPI inositol-deacylase family.

It is found in the endoplasmic reticulum membrane. In terms of biological role, involved in inositol deacylation of GPI-anchored proteins which plays important roles in the quality control and ER-associated degradation of GPI-anchored proteins. The protein is GPI inositol-deacylase B (BST1B) of Yarrowia lipolytica (strain CLIB 122 / E 150) (Yeast).